A 397-amino-acid chain; its full sequence is Major outer membrane porin, serovar H (397 aa).

An N-terminal signal peptide occupies residues 1 to 22 (MKKLLKSVLVFAALSSASSLQA).

The protein belongs to the chlamydial porin (CP) (TC 1.B.2) family. In terms of assembly, part of a disulfide cross-linked outer membrane complex (COMC) composed of the major outer membrane porin (MOMP), the small cysteine-rich protein (OmcA) and the large cysteine-rich periplasmic protein (OmcB).

Its subcellular location is the cell outer membrane. Functionally, in elementary bodies (EBs, the infectious stage, which is able to survive outside the host cell) provides the structural integrity of the outer envelope through disulfide cross-links with the small cysteine-rich protein and the large cysteine-rich periplasmic protein. It has been described in publications as the Sarkosyl-insoluble COMC (Chlamydia outer membrane complex), and serves as the functional equivalent of peptidoglycan. Permits diffusion of specific solutes through the outer membrane. This Chlamydia trachomatis protein is Major outer membrane porin, serovar H (ompA).